The sequence spans 46 residues: Amine oxidase [flavin-containing] A (46 aa).

This sequence belongs to the flavin monoamine oxidase family. As to quaternary structure, monomer, homo- or heterodimer (containing two subunits of similar size). Each subunit contains a covalently bound flavin. Enzymatically active as monomer. FAD is required as a cofactor.

The protein localises to the mitochondrion outer membrane. The catalysed reaction is a secondary aliphatic amine + O2 + H2O = a primary amine + an aldehyde + H2O2. It catalyses the reaction a primary methyl amine + O2 + H2O = an aldehyde + H2O2 + NH4(+). The enzyme catalyses (R)-adrenaline + O2 + H2O = (R)-3,4-dihydroxymandelaldehyde + methylamine + H2O2. It carries out the reaction dopamine + O2 + H2O = 3,4-dihydroxyphenylacetaldehyde + H2O2 + NH4(+). The catalysed reaction is tyramine + O2 + H2O = (4-hydroxyphenyl)acetaldehyde + H2O2 + NH4(+). It catalyses the reaction (R)-noradrenaline + O2 + H2O = (R)-3,4-dihydroxymandelaldehyde + H2O2 + NH4(+). The enzyme catalyses serotonin + O2 + H2O = (5-hydroxyindol-3-yl)acetaldehyde + H2O2 + NH4(+). It carries out the reaction kynuramine + O2 + H2O = 3-(2-aminophenyl)-3-oxopropanal + H2O2 + NH4(+). The catalysed reaction is tryptamine + O2 + H2O = indole-3-acetaldehyde + H2O2 + NH4(+). It catalyses the reaction 2-phenylethylamine + O2 + H2O = 2-phenylacetaldehyde + H2O2 + NH4(+). In terms of biological role, catalyzes the oxidative deamination of primary and some secondary amine such as neurotransmitters, with concomitant reduction of oxygen to hydrogen peroxide and has important functions in the metabolism of neuroactive and vasoactive amines in the central nervous system and peripheral tissues. Preferentially oxidizes serotonin. Also catalyzes the oxidative deamination of kynuramine to 3-(2-aminophenyl)-3-oxopropanal that can spontaneously condense to 4-hydroxyquinoline. In Ovis aries (Sheep), this protein is Amine oxidase [flavin-containing] A.